The chain runs to 611 residues: Oxidoreductase cicC (611 aa).

A signal peptide spans 1 to 20 (MALRYLNKFSLLSLAVPTLA). FAD contacts are provided by residues 45–46 (NA) and 65–66 (EA). N-linked (GlcNAc...) asparagine glycans are attached at residues Asn-76 and Asn-113. FAD contacts are provided by residues Val-123 and 131–134 (NLMT). 3 N-linked (GlcNAc...) asparagine glycosylation sites follow: Asn-282, Asn-410, and Asn-475. The Proton acceptor role is filled by His-547. The Proton donor role is filled by His-547. Ala-581 contributes to the FAD binding site. The active-site Proton acceptor is His-591. 592 to 593 (PI) is an FAD binding site.

It belongs to the GMC oxidoreductase family. FAD serves as cofactor.

The protein operates within phytotoxin biosynthesis. In terms of biological role, oxidoreductase; part of the gene cluster that mediates the biosynthesis of cichorine, a phytotoxin active against knapweed, corn, and soybeans. The first step in the pathway is performed by the non-reducing polyketide synthase pkbA that condenses one acetyl-CoA starter unit with 3 malonyl-CoA units. PkbA also catalyzes one methylation step to produce 3-methylorsellinate. The nonribosomal peptide synthase-like protein cicB, the cytochrome P450 monooxygenase cicH and the O-methyltransferase cicE are involved in the conversion of 3-methylorsellinate into nidulol. CicB converts 3-methylorsellinate to a yet unidentified intermediate, cicH may play a ring-closing role for cichorine and cicE is plausibly responsible for the methylation of one of the phenol groups. The oxidoreductase cicC acts downstream with still unidentified enzymes to further convert nidulol into cichorine. The sequence is that of Oxidoreductase cicC from Emericella nidulans (strain FGSC A4 / ATCC 38163 / CBS 112.46 / NRRL 194 / M139) (Aspergillus nidulans).